Reading from the N-terminus, the 302-residue chain is 5'-3' exonuclease (302 aa).

The 97-residue stretch at 173-269 folds into the 5'-3' exonuclease domain; the sequence is IPKLIPDLLG…NITTKKIKML (97 aa).

Its function is as follows. 5'-3' exonuclease acting preferentially on double-stranded DNA. In Buchnera aphidicola subsp. Baizongia pistaciae (strain Bp), this protein is 5'-3' exonuclease (pol).